A 315-amino-acid polypeptide reads, in one-letter code: Taste receptor type 2 member 129 (315 aa).

Over 1 to 9 the chain is Extracellular; it reads MDGIIQIIS. Residues 10–30 traverse the membrane as a helical segment; sequence AFIVIIEIIIGWFGNGFIVLV. At 31 to 46 the chain is on the cytoplasmic side; it reads NCMHWIKRRRISTVNQ. A helical transmembrane segment spans residues 47-67; that stretch reads ILTALAFSRIYLLLTVFTVIL. Residues 68–101 are Extracellular-facing; sequence ASVQYSNILVTRREVKVIIFHLITSNHFSMWLAA. Residues 102-122 traverse the membrane as a helical segment; the sequence is CLGLFYFLKIANFSNFIFVFL. The Cytoplasmic segment spans residues 123–128; that stretch reads KKRVNK. Residues 129–149 traverse the membrane as a helical segment; that stretch reads VVSGTLLMSLVFLFLNTLLIN. The Extracellular segment spans residues 150–185; sequence SYIDAQIDDYRGYLLYDFTSNITVSFYRVILVINNC. The N-linked (GlcNAc...) asparagine glycan is linked to Asn-170. Residues 186–206 traverse the membrane as a helical segment; sequence IFTSIPFALSQSTFLMLIFSL. The Cytoplasmic segment spans residues 207 to 233; that stretch reads WRHYKKMQQHAQRCRDTLTNAHIKVLQ. The chain crosses the membrane as a helical span at residues 234–254; the sequence is TMIMYVLLSAIFFLFLSMQIW. Residues 255 to 266 lie on the Extracellular side of the membrane; the sequence is RNKLMENILFIR. The helical transmembrane segment at 267-287 threads the bilayer; it reads FCETVAAVFPSGHSCVLIWGD. At 288–315 the chain is on the cytoplasmic side; that stretch reads TNLRQTFLSVLWWLKHRFTLWVPKLYCR.

The protein belongs to the G-protein coupled receptor T2R family.

The protein resides in the membrane. In terms of biological role, putative taste receptor which may play a role in the perception of bitterness. The sequence is that of Taste receptor type 2 member 129 from Rattus norvegicus (Rat).